We begin with the raw amino-acid sequence, 168 residues long: Small ribosomal subunit protein uS9 (168 aa).

The disordered stretch occupies residues 1-38 (MAKIADSIDSAQADSVENVESYSTETPESAAPAAPRPV). Over residues 9 to 22 (DSAQADSVENVESY) the composition is skewed to polar residues. Residues 23 to 37 (STETPESAAPAAPRP) are compositionally biased toward low complexity.

It belongs to the universal ribosomal protein uS9 family.

In Leifsonia xyli subsp. xyli (strain CTCB07), this protein is Small ribosomal subunit protein uS9.